We begin with the raw amino-acid sequence, 244 residues long: Lipoprotein-releasing system ATP-binding protein LolD (244 aa).

The 226-residue stretch at 19 to 244 folds into the ABC transporter domain; sequence IRAEALAKTY…KLRELAPSAV (226 aa). Residue 55-62 participates in ATP binding; the sequence is GASGAGKS.

Belongs to the ABC transporter superfamily. Lipoprotein translocase (TC 3.A.1.125) family. The complex is composed of two ATP-binding proteins (LolD) and two transmembrane proteins (LolC and LolE).

The protein localises to the cell inner membrane. Functionally, part of the ABC transporter complex LolCDE involved in the translocation of mature outer membrane-directed lipoproteins, from the inner membrane to the periplasmic chaperone, LolA. Responsible for the formation of the LolA-lipoprotein complex in an ATP-dependent manner. This is Lipoprotein-releasing system ATP-binding protein LolD from Xanthomonas euvesicatoria pv. vesicatoria (strain 85-10) (Xanthomonas campestris pv. vesicatoria).